Here is a 641-residue protein sequence, read N- to C-terminus: Epithelial sodium channel subunit beta (641 aa).

Over M1–A50 the chain is Cytoplasmic. A helical transmembrane segment spans residues M51–I71. Residues K72–G533 are Extracellular-facing. Cystine bridges form between C98–C273, C185–C190, C197–C204, C250–C257, C362–C449, C387–C445, C391–C441, C400–C427, and C402–C416. N141 is a glycosylation site (N-linked (GlcNAc...) asparagine). A glycan (N-linked (GlcNAc...) asparagine) is linked at N379. A helical transmembrane segment spans residues S534–I554. Residues K555 to I641 lie on the Cytoplasmic side of the membrane. Positions T597 to L624 are disordered. Residues Q609–N620 are compositionally biased toward pro residues. The PY motif; recruits WW domain-containing proteins and is thereby required for ubiquitination and inhibition of the channel by NEDD4 and NEDD4L signature appears at P617–Y621. A phosphoserine mark is found at S634 and S636.

The protein belongs to the amiloride-sensitive sodium channel (TC 1.A.6) family. SCNN1B subfamily. Component of the heterotrimeric epithelial sodium channel (ENaC) composed of an alpha/SCNN1A, a beta/SCNN1B and a gamma/SCNN1G subunit. An additional delta/SCNN1D subunit can replace the alpha/SCNN1A subunit to form an alternative channel with specific properties. Interacts with WWP1 (via WW domains). Interacts with WWP2 (via WW domains); inhibits the channel. Interacts with the full-length immature form of PCSK9 (pro-PCSK9). Interacts (N-glycosylated) with BPIFA1; the interaction is direct and inhibits the proteolytic processing of SCNN1A and SCNN1G and the activation of ENaC. Post-translationally, ubiquitinated. Can be ubiquitinated at multiple sites and undergo monoubiquitination and polyubiquitination. Ubiquitination by NEDD4 or NEDD4L inhibits the ENaC channel through endocytosis, intracellular retention and degradation of its individual subunits. However, some studies could not confirm the ubiquitination of this subunit of the ENaC. Phosphorylated on serine and threonine residues. Aldosterone and insulin increase the basal level of phosphorylation. In terms of processing, N-glycosylated. N-glycosylation is required for interaction with BPIFA1.

It localises to the apical cell membrane. The protein localises to the cytoplasmic vesicle membrane. The catalysed reaction is Na(+)(in) = Na(+)(out). With respect to regulation, originally identified and characterized by its inhibition by the diuretic drug amiloride. Its function is as follows. This is one of the three pore-forming subunits of the heterotrimeric epithelial sodium channel (ENaC), a critical regulator of sodium balance and fluid homeostasis. ENaC operates in epithelial tissues, where it mediates the electrodiffusion of sodium ions from extracellular fluid through the apical membrane of cells, with water following osmotically. It plays a key role in maintaining sodium homeostasis through electrogenic sodium reabsorption in the kidneys. Additionally, ENaC is essential for airway surface liquid homeostasis, which is crucial for proper mucus clearance. This Bos taurus (Bovine) protein is Epithelial sodium channel subunit beta.